Consider the following 289-residue polypeptide: Diaminopimelate epimerase (289 aa).

Substrate is bound by residues asparagine 13, glutamine 47, and asparagine 67. Cysteine 76 acts as the Proton donor in catalysis. Substrate-binding positions include 77–78 (GN), asparagine 167, asparagine 200, and 218–219 (ER). The active-site Proton acceptor is the cysteine 227. 228–229 (GT) is a substrate binding site.

This sequence belongs to the diaminopimelate epimerase family. As to quaternary structure, homodimer.

It localises to the cytoplasm. The enzyme catalyses (2S,6S)-2,6-diaminopimelate = meso-2,6-diaminopimelate. It functions in the pathway amino-acid biosynthesis; L-lysine biosynthesis via DAP pathway; DL-2,6-diaminopimelate from LL-2,6-diaminopimelate: step 1/1. In terms of biological role, catalyzes the stereoinversion of LL-2,6-diaminopimelate (L,L-DAP) to meso-diaminopimelate (meso-DAP), a precursor of L-lysine and an essential component of the bacterial peptidoglycan. In Burkholderia thailandensis (strain ATCC 700388 / DSM 13276 / CCUG 48851 / CIP 106301 / E264), this protein is Diaminopimelate epimerase.